Reading from the N-terminus, the 249-residue chain is Probable septum site-determining protein MinC (249 aa).

The interval 117-138 is disordered; the sequence is AVRPPQPPPPPHARAEPAAPVA.

Belongs to the MinC family. As to quaternary structure, interacts with MinD and FtsZ.

Its function is as follows. Cell division inhibitor that blocks the formation of polar Z ring septums. Rapidly oscillates between the poles of the cell to destabilize FtsZ filaments that have formed before they mature into polar Z rings. Prevents FtsZ polymerization. The chain is Probable septum site-determining protein MinC from Xanthomonas campestris pv. campestris (strain 8004).